Reading from the N-terminus, the 153-residue chain is Iron-sulfur cluster assembly scaffold protein IscU 1 (153 aa).

Residues Cys-33, Cys-58, His-101, and Cys-102 each coordinate [2Fe-2S] cluster.

It belongs to the NifU family. Forms a heterotetramer with IscS2.

Functionally, a scaffold on which IscS assembles Fe-S clusters. Subsequently gives the nascent cluster to other proteins. It is likely that Fe-S cluster coordination is flexible as the role of this complex is to build and then hand off Fe-S clusters. This Archaeoglobus fulgidus (strain ATCC 49558 / DSM 4304 / JCM 9628 / NBRC 100126 / VC-16) protein is Iron-sulfur cluster assembly scaffold protein IscU 1 (iscU1).